We begin with the raw amino-acid sequence, 235 residues long: Carboxy-S-adenosyl-L-methionine synthase (235 aa).

S-adenosyl-L-methionine is bound by residues tyrosine 35, 60 to 62 (GCS), 84 to 85 (DN), 110 to 111 (DI), asparagine 125, and arginine 192.

Belongs to the class I-like SAM-binding methyltransferase superfamily. Cx-SAM synthase family. As to quaternary structure, homodimer.

The catalysed reaction is prephenate + S-adenosyl-L-methionine = carboxy-S-adenosyl-L-methionine + 3-phenylpyruvate + H2O. In terms of biological role, catalyzes the conversion of S-adenosyl-L-methionine (SAM) to carboxy-S-adenosyl-L-methionine (Cx-SAM). This is Carboxy-S-adenosyl-L-methionine synthase from Sulfurimonas denitrificans (strain ATCC 33889 / DSM 1251) (Thiomicrospira denitrificans (strain ATCC 33889 / DSM 1251)).